The primary structure comprises 160 residues: Probable transcriptional regulator YgiV (160 aa).

Its function is as follows. Represses expression of mcbR. The polypeptide is Probable transcriptional regulator YgiV (ygiV) (Escherichia coli O157:H7).